The chain runs to 208 residues: ER membrane protein complex subunit 8/9 homolog (208 aa).

Residues tyrosine 11–valine 146 enclose the MPN domain.

This sequence belongs to the EMC8/EMC9 family.

The chain is ER membrane protein complex subunit 8/9 homolog (EMB2731) from Arabidopsis thaliana (Mouse-ear cress).